A 740-amino-acid polypeptide reads, in one-letter code: UvrABC system protein B (740 aa).

Residues 1-36 (MTIAIRTTLDEPENHSDFVPHRPSRPEKTEPSKPFR) are disordered. A compositionally biased stretch (basic and acidic residues) spans 8–33 (TLDEPENHSDFVPHRPSRPEKTEPSK). The 389-residue stretch at 56-444 (KDIQKGERDQ…GGVFVEQIIR (389 aa)) folds into the Helicase ATP-binding domain. 69–76 (GVTGSGKT) is a binding site for ATP. Residues 122-145 (YYDYYQPEAYVPRTDTYIEKDSAI) carry the Beta-hairpin motif. Positions 461 to 627 (QVDNLIFEAK…TVKRQVDDIV (167 aa)) constitute a Helicase C-terminal domain. Positions 651–686 (ARSISETEKEMLEAAANLEFEKAAQLRDVLHQLKRQ) constitute a UVR domain. Residues 687 to 740 (ELGLPPEKSSEIQGRSEAGRPGTRKTRSDKAREAKASKRVKQEAGEKLLRSRGH) form a disordered region. The span at 712–740 (TRSDKAREAKASKRVKQEAGEKLLRSRGH) shows a compositional bias: basic and acidic residues.

It belongs to the UvrB family. As to quaternary structure, forms a heterotetramer with UvrA during the search for lesions. Interacts with UvrC in an incision complex.

Its subcellular location is the cytoplasm. Functionally, the UvrABC repair system catalyzes the recognition and processing of DNA lesions. A damage recognition complex composed of 2 UvrA and 2 UvrB subunits scans DNA for abnormalities. Upon binding of the UvrA(2)B(2) complex to a putative damaged site, the DNA wraps around one UvrB monomer. DNA wrap is dependent on ATP binding by UvrB and probably causes local melting of the DNA helix, facilitating insertion of UvrB beta-hairpin between the DNA strands. Then UvrB probes one DNA strand for the presence of a lesion. If a lesion is found the UvrA subunits dissociate and the UvrB-DNA preincision complex is formed. This complex is subsequently bound by UvrC and the second UvrB is released. If no lesion is found, the DNA wraps around the other UvrB subunit that will check the other stand for damage. This chain is UvrABC system protein B, found in Zymomonas mobilis subsp. mobilis (strain ATCC 31821 / ZM4 / CP4).